A 68-amino-acid chain; its full sequence is Conotoxin Cal14.13c (68 aa).

The first 20 residues, 1–20 (MKLCVVXVLLMLAMPFNGGE), serve as a signal peptide directing secretion. The propeptide occupies 21–68 (ASRFFNQHARSQRSGMKTRGIWCDPPCPEGETCRGGECSDEFNGDLGG). Leucine amide is present on Leu-66.

In terms of processing, contains 2 disulfide bonds. Expressed by the venom duct.

The protein resides in the secreted. Functionally, probable neurotoxin with unknown target. Possibly targets ion channels. This Californiconus californicus (California cone) protein is Conotoxin Cal14.13c.